We begin with the raw amino-acid sequence, 105 residues long: Meiotically up-regulated gene 52 protein (105 aa).

Its function is as follows. Has a role in meiosis. This Schizosaccharomyces pombe (strain 972 / ATCC 24843) (Fission yeast) protein is Meiotically up-regulated gene 52 protein (mug52).